A 72-amino-acid chain; its full sequence is MAHPSQLGFQDAASPVMEELLHFHDHALMIVFLISTLVLYIIVAMVSTKLTNKYXLDSQEIEVIWTXLPAVI.

The Mitochondrial intermembrane portion of the chain corresponds to 1 to 14 (MAHPSQLGFQDAAS). Residues 15 to 45 (PVMEELLHFHDHALMIVFLISTLVLYIIVAM) form a helical membrane-spanning segment. Over 46–72 (VSTKLTNKYXLDSQEIEVIWTXLPAVI) the chain is Mitochondrial matrix.

The protein belongs to the cytochrome c oxidase subunit 2 family. In terms of assembly, component of the cytochrome c oxidase (complex IV, CIV), a multisubunit enzyme composed of 14 subunits. The complex is composed of a catalytic core of 3 subunits MT-CO1, MT-CO2 and MT-CO3, encoded in the mitochondrial DNA, and 11 supernumerary subunits COX4I, COX5A, COX5B, COX6A, COX6B, COX6C, COX7A, COX7B, COX7C, COX8 and NDUFA4, which are encoded in the nuclear genome. The complex exists as a monomer or a dimer and forms supercomplexes (SCs) in the inner mitochondrial membrane with NADH-ubiquinone oxidoreductase (complex I, CI) and ubiquinol-cytochrome c oxidoreductase (cytochrome b-c1 complex, complex III, CIII), resulting in different assemblies (supercomplex SCI(1)III(2)IV(1) and megacomplex MCI(2)III(2)IV(2)). Found in a complex with TMEM177, COA6, COX18, COX20, SCO1 and SCO2. Interacts with TMEM177 in a COX20-dependent manner. Interacts with COX20. Interacts with COX16. Cu cation is required as a cofactor.

The protein resides in the mitochondrion inner membrane. The enzyme catalyses 4 Fe(II)-[cytochrome c] + O2 + 8 H(+)(in) = 4 Fe(III)-[cytochrome c] + 2 H2O + 4 H(+)(out). Functionally, component of the cytochrome c oxidase, the last enzyme in the mitochondrial electron transport chain which drives oxidative phosphorylation. The respiratory chain contains 3 multisubunit complexes succinate dehydrogenase (complex II, CII), ubiquinol-cytochrome c oxidoreductase (cytochrome b-c1 complex, complex III, CIII) and cytochrome c oxidase (complex IV, CIV), that cooperate to transfer electrons derived from NADH and succinate to molecular oxygen, creating an electrochemical gradient over the inner membrane that drives transmembrane transport and the ATP synthase. Cytochrome c oxidase is the component of the respiratory chain that catalyzes the reduction of oxygen to water. Electrons originating from reduced cytochrome c in the intermembrane space (IMS) are transferred via the dinuclear copper A center (CU(A)) of subunit 2 and heme A of subunit 1 to the active site in subunit 1, a binuclear center (BNC) formed by heme A3 and copper B (CU(B)). The BNC reduces molecular oxygen to 2 water molecules using 4 electrons from cytochrome c in the IMS and 4 protons from the mitochondrial matrix. The sequence is that of Cytochrome c oxidase subunit 2 (mt-co2) from Gomphosus varius (Bird wrasse).